We begin with the raw amino-acid sequence, 95 residues long: Putative per-hexamer repeat protein 4 (95 aa).

This chain is Putative per-hexamer repeat protein 4 (Phxr4), found in Mus musculus (Mouse).